We begin with the raw amino-acid sequence, 1938 residues long: Myosin heavy chain, striated muscle (1938 aa).

Residues 29–79 (DGKKNCWVPDEKEGFASAEIQSSKGDEITVKIVADSSTRTVKKDDIQSMNP) enclose the Myosin N-terminal SH3-like domain. Residues 83–775 (EKLEDMANMT…VLGNLEEMRD (693 aa)) enclose the Myosin motor domain. 176–183 (GESGAGKT) is an ATP binding site. The segment at 653 to 675 (LNKLMKNLYSTHPHFVRCIIPNE) is actin-binding. Positions 778–805 (LSKIISMFQAHIRGYLIRKAYKKLQDQR) constitute an IQ domain. A rodlike tail (S2 and LMM domains) region spans residues 836–1938 (LLSIARQEEE…RSSVSVSASN (1103 aa)). Positions 836–1938 (LLSIARQEEE…RSSVSVSASN (1103 aa)) form a coiled coil. Basic and acidic residues-rich tracts occupy residues 1041–1058 (VRGDVEKAKRKVEQDLKS) and 1212–1225 (SKLEKDKKDLKREM). 4 disordered regions span residues 1041 to 1062 (VRGDVEKAKRKVEQDLKSTQEN), 1187 to 1332 (SALR…EVRN), 1344 to 1363 (LEEEQESKSDVQRQLSKANN), and 1898 to 1938 (HELE…SASN). A compositionally biased stretch (polar residues) spans 1265–1285 (RSINELQSQKSRLQAENSDLT). Composition is skewed to basic and acidic residues over residues 1286 to 1303 (RQLEDAEHRVSVLSKEKS), 1310 to 1332 (EDARRSLEEETRARSKLQNEVRN), and 1344 to 1354 (LEEEQESKSDV). Low complexity predominate over residues 1922–1938 (RSSVSVQRSSVSVSASN).

It belongs to the TRAFAC class myosin-kinesin ATPase superfamily. Myosin family. In terms of assembly, muscle myosin is a hexameric protein that consists of 2 heavy chain subunits (MHC), 2 alkali light chain subunits (MLC) and 2 regulatory light chain subunits (MLC-2).

The protein localises to the cytoplasm. It localises to the myofibril. Its function is as follows. Muscle contraction. In terms of biological role, myosin is a protein that binds to F-actin and has ATPase activity that is activated by F-actin. The sequence is that of Myosin heavy chain, striated muscle from Argopecten irradians (Bay scallop).